A 507-amino-acid chain; its full sequence is ATP synthase subunit alpha (507 aa).

169–176 serves as a coordination point for ATP; that stretch reads GDRQTGKT.

This sequence belongs to the ATPase alpha/beta chains family. As to quaternary structure, F-type ATPases have 2 components, CF(1) - the catalytic core - and CF(0) - the membrane proton channel. CF(1) has five subunits: alpha(3), beta(3), gamma(1), delta(1), epsilon(1). CF(0) has three main subunits: a(1), b(2) and c(9-12). The alpha and beta chains form an alternating ring which encloses part of the gamma chain. CF(1) is attached to CF(0) by a central stalk formed by the gamma and epsilon chains, while a peripheral stalk is formed by the delta and b chains.

The protein resides in the cell inner membrane. It catalyses the reaction ATP + H2O + 4 H(+)(in) = ADP + phosphate + 5 H(+)(out). Its function is as follows. Produces ATP from ADP in the presence of a proton gradient across the membrane. The alpha chain is a regulatory subunit. The protein is ATP synthase subunit alpha of Magnetococcus marinus (strain ATCC BAA-1437 / JCM 17883 / MC-1).